The following is a 316-amino-acid chain: Lipoyl synthase (316 aa).

7 residues coordinate [4Fe-4S] cluster: Cys-61, Cys-66, Cys-72, Cys-87, Cys-91, Cys-94, and Ser-301. Residues 73–290 (FGKGTATFMI…ERAAIEMGFS (218 aa)) form the Radical SAM core domain.

This sequence belongs to the radical SAM superfamily. Lipoyl synthase family. It depends on [4Fe-4S] cluster as a cofactor.

The protein localises to the cytoplasm. The catalysed reaction is [[Fe-S] cluster scaffold protein carrying a second [4Fe-4S](2+) cluster] + N(6)-octanoyl-L-lysyl-[protein] + 2 oxidized [2Fe-2S]-[ferredoxin] + 2 S-adenosyl-L-methionine + 4 H(+) = [[Fe-S] cluster scaffold protein] + N(6)-[(R)-dihydrolipoyl]-L-lysyl-[protein] + 4 Fe(3+) + 2 hydrogen sulfide + 2 5'-deoxyadenosine + 2 L-methionine + 2 reduced [2Fe-2S]-[ferredoxin]. Its pathway is protein modification; protein lipoylation via endogenous pathway; protein N(6)-(lipoyl)lysine from octanoyl-[acyl-carrier-protein]: step 2/2. In terms of biological role, catalyzes the radical-mediated insertion of two sulfur atoms into the C-6 and C-8 positions of the octanoyl moiety bound to the lipoyl domains of lipoate-dependent enzymes, thereby converting the octanoylated domains into lipoylated derivatives. The sequence is that of Lipoyl synthase from Nitrosospira multiformis (strain ATCC 25196 / NCIMB 11849 / C 71).